We begin with the raw amino-acid sequence, 173 residues long: Bifunctional protein PyrR (173 aa).

A PRPP-binding motif is present at residues valine 93–threonine 105.

The protein belongs to the purine/pyrimidine phosphoribosyltransferase family. PyrR subfamily. As to quaternary structure, homodimer and homohexamer; in equilibrium.

It carries out the reaction UMP + diphosphate = 5-phospho-alpha-D-ribose 1-diphosphate + uracil. Its function is as follows. Regulates transcriptional attenuation of the pyrimidine nucleotide (pyr) operon by binding in a uridine-dependent manner to specific sites on pyr mRNA. This disrupts an antiterminator hairpin in the RNA and favors formation of a downstream transcription terminator, leading to a reduced expression of downstream genes. Also displays a weak uracil phosphoribosyltransferase activity which is not physiologically significant. This chain is Bifunctional protein PyrR, found in Streptococcus thermophilus (strain ATCC BAA-491 / LMD-9).